A 104-amino-acid polypeptide reads, in one-letter code: UPF0145 protein HCH_01985 (104 aa).

It belongs to the UPF0145 family.

This is UPF0145 protein HCH_01985 from Hahella chejuensis (strain KCTC 2396).